Here is a 356-residue protein sequence, read N- to C-terminus: Tyrosine recombinase XerS (356 aa).

The 106-residue stretch at 16 to 121 (LMPWFVLEYY…ALSSLYKYLT (106 aa)) folds into the Core-binding (CB) domain. The 186-residue stretch at 169 to 354 (KFLDYVENEY…VNDEQKNALD (186 aa)) folds into the Tyr recombinase domain. Residues Arg210, Lys234, His306, Arg309, and His332 contribute to the active site. Tyr341 functions as the O-(3'-phospho-DNA)-tyrosine intermediate in the catalytic mechanism.

Belongs to the 'phage' integrase family. XerS subfamily.

Its subcellular location is the cytoplasm. Its activity is regulated as follows. FtsK is required for recombination. Site-specific tyrosine recombinase, which acts by catalyzing the cutting and rejoining of the recombining DNA molecules. Essential to convert dimers of the bacterial chromosome into monomers to permit their segregation at cell division. This Streptococcus thermophilus (strain CNRZ 1066) protein is Tyrosine recombinase XerS.